A 486-amino-acid polypeptide reads, in one-letter code: Aspartyl/glutamyl-tRNA(Asn/Gln) amidotransferase subunit B (486 aa).

It belongs to the GatB/GatE family. GatB subfamily. As to quaternary structure, heterotrimer of A, B and C subunits.

The enzyme catalyses L-glutamyl-tRNA(Gln) + L-glutamine + ATP + H2O = L-glutaminyl-tRNA(Gln) + L-glutamate + ADP + phosphate + H(+). The catalysed reaction is L-aspartyl-tRNA(Asn) + L-glutamine + ATP + H2O = L-asparaginyl-tRNA(Asn) + L-glutamate + ADP + phosphate + 2 H(+). Its function is as follows. Allows the formation of correctly charged Asn-tRNA(Asn) or Gln-tRNA(Gln) through the transamidation of misacylated Asp-tRNA(Asn) or Glu-tRNA(Gln) in organisms which lack either or both of asparaginyl-tRNA or glutaminyl-tRNA synthetases. The reaction takes place in the presence of glutamine and ATP through an activated phospho-Asp-tRNA(Asn) or phospho-Glu-tRNA(Gln). In Leptospira interrogans serogroup Icterohaemorrhagiae serovar Lai (strain 56601), this protein is Aspartyl/glutamyl-tRNA(Asn/Gln) amidotransferase subunit B.